Here is a 215-residue protein sequence, read N- to C-terminus: Ribonuclease T (215 aa).

Residues 20-194 enclose the Exonuclease domain; it reads VVIDVETAGF…YDTMQTAKLF (175 aa). The Mg(2+) site is built by aspartate 23, glutamate 25, histidine 181, and aspartate 186. Histidine 181 functions as the Proton donor/acceptor in the catalytic mechanism.

The protein belongs to the RNase T family. As to quaternary structure, homodimer. Mg(2+) serves as cofactor.

In terms of biological role, trims short 3' overhangs of a variety of RNA species, leaving a one or two nucleotide 3' overhang. Responsible for the end-turnover of tRNA: specifically removes the terminal AMP residue from uncharged tRNA (tRNA-C-C-A). Also appears to be involved in tRNA biosynthesis. The sequence is that of Ribonuclease T from Yersinia enterocolitica serotype O:8 / biotype 1B (strain NCTC 13174 / 8081).